The following is a 51-amino-acid chain: APNQRLCGSHLVEALFLICGERGFYYSPRTGIVEQCCENTCSLYELENYCN.

Intrachain disulfides connect Cys7-Cys37, Cys19-Cys50, and Cys36-Cys41.

Belongs to the insulin family. As to quaternary structure, heterodimer of a B chain and an A chain linked by two disulfide bonds.

Its subcellular location is the secreted. Its function is as follows. Insulin decreases blood glucose concentration. It increases cell permeability to monosaccharides, amino acids and fatty acids. It accelerates glycolysis, the pentose phosphate cycle, and glycogen synthesis in liver. The polypeptide is Insulin (INS) (Ptyas dhumnades (Big-eyed ratsnake)).